Reading from the N-terminus, the 489-residue chain is Cobyric acid synthase (489 aa).

In terms of domain architecture, GATase cobBQ-type spans G251 to F444. Catalysis depends on C329, which acts as the Nucleophile. H436 is a catalytic residue.

Belongs to the CobB/CobQ family. CobQ subfamily.

The protein operates within cofactor biosynthesis; adenosylcobalamin biosynthesis. In terms of biological role, catalyzes amidations at positions B, D, E, and G on adenosylcobyrinic A,C-diamide. NH(2) groups are provided by glutamine, and one molecule of ATP is hydrogenolyzed for each amidation. This is Cobyric acid synthase from Chloroflexus aurantiacus (strain ATCC 29366 / DSM 635 / J-10-fl).